The primary structure comprises 319 residues: Succinoglycan biosynthesis protein ExoW (319 aa).

This sequence belongs to the glycosyltransferase 2 family.

Its subcellular location is the cell membrane. Its pathway is glycan metabolism; exopolysaccharide biosynthesis. Its function is as follows. Glycosyltransferase required for the synthesis of succinoglycan (EPS I). Needed for the addition of the seventh sugar (glucose), catalyzes the formation of a beta-1,3 linkage between the seventh and eighth sugar. This is Succinoglycan biosynthesis protein ExoW (exoW) from Rhizobium meliloti (strain 1021) (Ensifer meliloti).